The primary structure comprises 276 residues: Putative pyruvate, phosphate dikinase regulatory protein 2 (276 aa).

146–153 (GVSRTSKT) is an ADP binding site.

The protein belongs to the pyruvate, phosphate/water dikinase regulatory protein family. PDRP subfamily.

It catalyses the reaction N(tele)-phospho-L-histidyl/L-threonyl-[pyruvate, phosphate dikinase] + ADP = N(tele)-phospho-L-histidyl/O-phospho-L-threonyl-[pyruvate, phosphate dikinase] + AMP + H(+). The enzyme catalyses N(tele)-phospho-L-histidyl/O-phospho-L-threonyl-[pyruvate, phosphate dikinase] + phosphate + H(+) = N(tele)-phospho-L-histidyl/L-threonyl-[pyruvate, phosphate dikinase] + diphosphate. Its function is as follows. Bifunctional serine/threonine kinase and phosphorylase involved in the regulation of the pyruvate, phosphate dikinase (PPDK) by catalyzing its phosphorylation/dephosphorylation. This chain is Putative pyruvate, phosphate dikinase regulatory protein 2, found in Enterococcus faecalis (strain ATCC 700802 / V583).